A 95-amino-acid polypeptide reads, in one-letter code: MSFKFEAEVRSAQGKGASRRLRHNGQVPAIIYGGNAEPVSIILDHDKVNNAQAHDAFYNEVLTIVVAGKEEQVKVQAIQRHPTKPKLVHLDFKRA.

The protein belongs to the bacterial ribosomal protein bL25 family. In terms of assembly, part of the 50S ribosomal subunit; part of the 5S rRNA/L5/L18/L25 subcomplex. Contacts the 5S rRNA. Binds to the 5S rRNA independently of L5 and L18.

Functionally, this is one of the proteins that binds to the 5S RNA in the ribosome where it forms part of the central protuberance. The sequence is that of Large ribosomal subunit protein bL25 from Actinobacillus pleuropneumoniae serotype 3 (strain JL03).